The chain runs to 110 residues: Chelonianin (110 aa).

Position 1 is a pyrrolidone carboxylic acid (Gln-1). The BPTI/Kunitz inhibitor domain maps to 8 to 58 (CRLPPEQGPCKGRIPRYFYNPASRMCESFIYGGCKGNKNNFKTKAECVRAC). 7 disulfide bridges follow: Cys-8–Cys-58, Cys-17–Cys-41, Cys-33–Cys-54, Cys-67–Cys-92, Cys-76–Cys-97, Cys-80–Cys-93, and Cys-86–Cys-101. In terms of domain architecture, WAP spans 60 to 105 (PPERPGVCPKTSGPGICLHGCDSDSDCKEGQKCCFDGCGYICLTVA).

Functionally, the first domain inhibits trypsin; the second one inhibitis subtilisin. The polypeptide is Chelonianin (Caretta caretta (Loggerhead sea turtle)).